The sequence spans 187 residues: Putative type I specificity subunit S.MpnORF289P N-terminus (187 aa).

Belongs to the type-I restriction system S methylase family. In terms of assembly, the methyltransferase is composed of M and S polypeptides.

In terms of biological role, the N-terminal section of a specificity (S) subunit of a type I methyltransferase (MTase); this subunit dictates DNA sequence specificity. The single R subunit has multiple frameshifts and is probably not expressed. The protein is Putative type I specificity subunit S.MpnORF289P N-terminus of Mycoplasma pneumoniae (strain ATCC 29342 / M129 / Subtype 1) (Mycoplasmoides pneumoniae).